A 111-amino-acid polypeptide reads, in one-letter code: UPF0060 membrane protein Ajs_1473 (111 aa).

The next 4 helical transmembrane spans lie at 8–28, 33–53, 65–85, and 88–108; these read ILFA…WLVV, SAWL…LLTL, YGGM…GVAL, and WDFV…LQPA.

The protein belongs to the UPF0060 family.

The protein localises to the cell inner membrane. This is UPF0060 membrane protein Ajs_1473 from Acidovorax sp. (strain JS42).